A 674-amino-acid chain; its full sequence is tRNA-guanine(15) transglycosylase (674 aa).

The Nucleophile role is filled by D90. Substrate contacts are provided by D125 and A192. Zn(2+) is bound by residues C275, C277, and C280. One can recognise a PUA domain in the interval 596-671 (HNRVVVSEDS…QAIKTRKWKK (76 aa)).

It belongs to the archaeosine tRNA-ribosyltransferase family. Zn(2+) is required as a cofactor.

The catalysed reaction is guanosine(15) in tRNA + 7-cyano-7-deazaguanine = 7-cyano-7-carbaguanosine(15) in tRNA + guanine. The protein operates within tRNA modification; archaeosine-tRNA biosynthesis. Exchanges the guanine residue with 7-cyano-7-deazaguanine (preQ0) at position 15 in the dihydrouridine loop (D-loop) of archaeal tRNAs. This chain is tRNA-guanine(15) transglycosylase, found in Methanosphaera stadtmanae (strain ATCC 43021 / DSM 3091 / JCM 11832 / MCB-3).